A 136-amino-acid chain; its full sequence is Large ribosomal subunit protein uL16 (136 aa).

This sequence belongs to the universal ribosomal protein uL16 family. As to quaternary structure, part of the 50S ribosomal subunit.

Binds 23S rRNA and is also seen to make contacts with the A and possibly P site tRNAs. The chain is Large ribosomal subunit protein uL16 from Erwinia tasmaniensis (strain DSM 17950 / CFBP 7177 / CIP 109463 / NCPPB 4357 / Et1/99).